Consider the following 150-residue polypeptide: Allograft inflammatory factor 1-like (150 aa).

Ser2 bears the N-acetylserine mark. Position 2 is a phosphoserine (Ser2). The region spanning 47–82 (EKLAAFKEKYMEFDLNNEGEIDLMSLKRMMEKLGVP) is the EF-hand 1 domain. Positions 60, 62, 64, and 66 each coordinate Ca(2+). One can recognise an EF-hand 2; degenerate domain in the interval 83–117 (KTHLEMKKMISEVTGGVSDTISYRDFVNMMLGKRS). The segment at 129 to 150 (KANESSPKPAGPPPERDIASLP) is disordered. Ser134 carries the phosphoserine modification.

Homodimer (Potential). Monomer.

The protein resides in the cytoplasm. Its subcellular location is the cytoskeleton. It localises to the cell projection. It is found in the ruffle membrane. Functionally, actin-binding protein that promotes actin bundling. May neither bind calcium nor depend on calcium for function. The polypeptide is Allograft inflammatory factor 1-like (Aif1l) (Mus musculus (Mouse)).